The primary structure comprises 762 residues: Phosphoribosylformylglycinamidine synthase subunit PurL (762 aa).

Residue H58 is part of the active site. The ATP site is built by Y61 and K105. E107 lines the Mg(2+) pocket. Residues 108–111 (SHNH) and R130 each bind substrate. H109 (proton acceptor) is an active-site residue. D131 provides a ligand contact to Mg(2+). Q260 is a substrate binding site. Position 288 (D288) interacts with Mg(2+). Substrate is bound at residue 332-334 (ESQ). 2 residues coordinate ATP: N520 and G557. N558 lines the Mg(2+) pocket. Residue S560 coordinates substrate.

This sequence belongs to the FGAMS family. As to quaternary structure, monomer. Part of the FGAM synthase complex composed of 1 PurL, 1 PurQ and 2 PurS subunits.

It localises to the cytoplasm. The catalysed reaction is N(2)-formyl-N(1)-(5-phospho-beta-D-ribosyl)glycinamide + L-glutamine + ATP + H2O = 2-formamido-N(1)-(5-O-phospho-beta-D-ribosyl)acetamidine + L-glutamate + ADP + phosphate + H(+). It functions in the pathway purine metabolism; IMP biosynthesis via de novo pathway; 5-amino-1-(5-phospho-D-ribosyl)imidazole from N(2)-formyl-N(1)-(5-phospho-D-ribosyl)glycinamide: step 1/2. In terms of biological role, part of the phosphoribosylformylglycinamidine synthase complex involved in the purines biosynthetic pathway. Catalyzes the ATP-dependent conversion of formylglycinamide ribonucleotide (FGAR) and glutamine to yield formylglycinamidine ribonucleotide (FGAM) and glutamate. The FGAM synthase complex is composed of three subunits. PurQ produces an ammonia molecule by converting glutamine to glutamate. PurL transfers the ammonia molecule to FGAR to form FGAM in an ATP-dependent manner. PurS interacts with PurQ and PurL and is thought to assist in the transfer of the ammonia molecule from PurQ to PurL. This is Phosphoribosylformylglycinamidine synthase subunit PurL from Rhodococcus erythropolis (strain PR4 / NBRC 100887).